The chain runs to 225 residues: Transcription factor HES-7 (225 aa).

The 58-residue stretch at 12–69 (GPKMLKPLVEKRRRDRINRSLEELRLLLLERTRDQNLRNPKLEKAEILEFAVGYLRER) folds into the bHLH domain. An Orange domain is found at 92–122 (YLSGFRECLLRLAAFAHDASPAARSQLFSAL). A disordered region spans residues 124-225 (GYRRPKPPRP…PPPAFWRPWP (102 aa)). 2 stretches are compositionally biased toward pro residues: residues 140-149 (LPAPRPPLDP) and 213-225 (PSLPPPAFWRPWP). Residues 221–224 (WRPW) carry the WRPW motif motif.

As to quaternary structure, transcription repression requires formation of a complex with a corepressor protein of the Groucho/TLE family.

The protein resides in the nucleus. Its function is as follows. Transcriptional repressor. Represses transcription from both N box- and E box-containing promoters. May with HES1, cooperatively regulate somite formation in the presomitic mesoderm (PSM). May function as a segmentation clock, which is essential for coordinated somite segmentation. The sequence is that of Transcription factor HES-7 (Hes7) from Mus musculus (Mouse).